The primary structure comprises 344 residues: Phosphoribosylformylglycinamidine cyclo-ligase (344 aa).

This sequence belongs to the AIR synthase family.

It localises to the cytoplasm. It catalyses the reaction 2-formamido-N(1)-(5-O-phospho-beta-D-ribosyl)acetamidine + ATP = 5-amino-1-(5-phospho-beta-D-ribosyl)imidazole + ADP + phosphate + H(+). It functions in the pathway purine metabolism; IMP biosynthesis via de novo pathway; 5-amino-1-(5-phospho-D-ribosyl)imidazole from N(2)-formyl-N(1)-(5-phospho-D-ribosyl)glycinamide: step 2/2. The chain is Phosphoribosylformylglycinamidine cyclo-ligase from Synechococcus sp. (strain RCC307).